A 241-amino-acid polypeptide reads, in one-letter code: MAKIHMVLQGKGGVGKSMIAATIAQYKAGKGQKPLCIDTDPVNATFEGYKALNVRRLNIMDGDDINTRNFDALVEMIASAEGDVIIDNGASSFVPLSHYLISNQVPALLQDMGHELVVHTVVTGGQALVDTVSGFAQLASQFPAECLFVVWLNPYWGPIEHEGKGFEQLKAYTANKGRVSAIIQIPALKEETYGRDFAEMLQDRRTFDEALADSALTIMTRQRLKIVKTQLFAQLENAAVL.

This sequence to plasmid IncP-alpha RP4 TraL.

This chain is Protein TraL (traL), found in Escherichia coli.